A 255-amino-acid polypeptide reads, in one-letter code: tRNA pseudouridine synthase B (255 aa).

The Nucleophile role is filled by D58.

This sequence belongs to the pseudouridine synthase TruB family. Type 1 subfamily.

It catalyses the reaction uridine(55) in tRNA = pseudouridine(55) in tRNA. Its function is as follows. Responsible for synthesis of pseudouridine from uracil-55 in the psi GC loop of transfer RNAs. The polypeptide is tRNA pseudouridine synthase B (Chlorobium chlorochromatii (strain CaD3)).